The primary structure comprises 139 residues: Mannose-specific lectin (139 aa).

One can recognise a Bulb-type lectin domain in the interval 1–109; it reads DNILYSGETL…ARWATGTNIH (109 aa). 22 residues coordinate alpha-D-mannopyranose: Q26, D28, N30, Y34, D37, K38, W41, A42, N44, Q57, D59, N61, Y65, I72, W73, N76, N83, Q89, D91, N93, Y97, and W102. Residues C29 and C52 are joined by a disulfide bond.

In terms of assembly, homotetramer; antiparallel. As to expression, detected in bulbs (at protein level).

The protein localises to the secreted. Mannose-specific lectin. Displays antiviral activity and therefore may contribute to defense against infections. Shows agglutinating activity towards rabbit erythrocytes. The chain is Mannose-specific lectin from Narcissus tazetta (Cream narcissus).